The sequence spans 121 residues: Small ribosomal subunit protein uS13 (121 aa).

Residues 92–121 (RKGLPMRGQRTRTNARTRKGPRRAAQALKK) form a disordered region.

The protein belongs to the universal ribosomal protein uS13 family. As to quaternary structure, part of the 30S ribosomal subunit. Forms a loose heterodimer with protein S19. Forms two bridges to the 50S subunit in the 70S ribosome.

Located at the top of the head of the 30S subunit, it contacts several helices of the 16S rRNA. In the 70S ribosome it contacts the 23S rRNA (bridge B1a) and protein L5 of the 50S subunit (bridge B1b), connecting the 2 subunits; these bridges are implicated in subunit movement. Contacts the tRNAs in the A and P-sites. The sequence is that of Small ribosomal subunit protein uS13 from Burkholderia cenocepacia (strain ATCC BAA-245 / DSM 16553 / LMG 16656 / NCTC 13227 / J2315 / CF5610) (Burkholderia cepacia (strain J2315)).